The chain runs to 441 residues: MVPLNQAFLISPSAPYGEFSIPPSKSHSLRAILFASLSKGTSIINNSLSSPDTDTMLSACKKFGARITRVGETLHIQGNPPPYSQYSSHHFHMGNSGIALRFLTALSSLSPSPILITGAHTLKRRPIEPLLSSLEQLGSEIRQKKSSSIPFVIRGPISSGHVTISGQDSQYASALAITAAVAPHPLSFSIENLKERPWFDLTLDWLHSLNISFSREQDSLFFPGAQSIKSFSYSVPGDYSSAAFLAALGLLSSSSNPTVLYNLPSKDPQGDKQLFSLLKSLGADIVIEKDHIEIRPSSFSGGVIDMDPFIDALPILAVLCCFAKNPSHLYNALGARDKESNRIEAIAHELRKMGGSVHPTQDGLYIEPSRLHGAVVHSHNDHRIAMALAVAGVHASSGQTLLCNTQCVNKSFPHFVIAAQTLHANIRHHQADFSLRSSLCR.

3 residues coordinate 3-phosphoshikimate: Lys25, Ser26, and Arg30. Lys25 contacts phosphoenolpyruvate. Residues Gly97 and Arg125 each coordinate phosphoenolpyruvate. The 3-phosphoshikimate site is built by Ser169, Gln170, Asp311, and Lys338. Gln170 contacts phosphoenolpyruvate. Residue Asp311 is the Proton acceptor of the active site. Positions 342, 383, and 410 each coordinate phosphoenolpyruvate.

Belongs to the EPSP synthase family. In terms of assembly, monomer.

The protein resides in the cytoplasm. The catalysed reaction is 3-phosphoshikimate + phosphoenolpyruvate = 5-O-(1-carboxyvinyl)-3-phosphoshikimate + phosphate. It participates in metabolic intermediate biosynthesis; chorismate biosynthesis; chorismate from D-erythrose 4-phosphate and phosphoenolpyruvate: step 6/7. Catalyzes the transfer of the enolpyruvyl moiety of phosphoenolpyruvate (PEP) to the 5-hydroxyl of shikimate-3-phosphate (S3P) to produce enolpyruvyl shikimate-3-phosphate and inorganic phosphate. In Chlamydia muridarum (strain MoPn / Nigg), this protein is 3-phosphoshikimate 1-carboxyvinyltransferase.